Reading from the N-terminus, the 289-residue chain is MDEKDWILLKILHEEQSVTKTAERLFTSQPSITYRLKKIEEIFGIELFTKRHKGITFTAEGEHLVAYARRMLQELQDTKDHISNLSKEVQGHLRLGVSSNFAQYKLPKLLREFSTMYPNVQYSVQTGWSTDVMKLLDAGIVQVGILRGSHRWKGVEERLTREKLHIISKKPITIEQLPFLPFIKYKTDASLKTIIEDWMHTNLKQAPIIAMEVDRQETCKEMVKHGLGYSIAPEICLQESDHLYTMELYNAKGKPLMRDTWLMYDQKSLGIKLVKAFIDFLKGEQMVTI.

The HTH lysR-type domain maps to 1–58 (MDEKDWILLKILHEEQSVTKTAERLFTSQPSITYRLKKIEEIFGIELFTKRHKGITFT). Residues 18–37 (VTKTAERLFTSQPSITYRLK) constitute a DNA-binding region (H-T-H motif).

This sequence belongs to the LysR transcriptional regulatory family.

This is an uncharacterized protein from Bacillus subtilis (strain 168).